The primary structure comprises 392 residues: ATP phosphoribosyltransferase regulatory subunit (392 aa).

The protein belongs to the class-II aminoacyl-tRNA synthetase family. HisZ subfamily. Heteromultimer composed of HisG and HisZ subunits.

It localises to the cytoplasm. The protein operates within amino-acid biosynthesis; L-histidine biosynthesis; L-histidine from 5-phospho-alpha-D-ribose 1-diphosphate: step 1/9. In terms of biological role, required for the first step of histidine biosynthesis. May allow the feedback regulation of ATP phosphoribosyltransferase activity by histidine. This chain is ATP phosphoribosyltransferase regulatory subunit, found in Prochlorococcus marinus (strain MIT 9303).